The primary structure comprises 31 residues: Kallikrein-1 (31 aa).

The Peptidase S1 domain occupies 1-31 (VIGGQECARDSHPWQAAVYHFSDIECGGVLV).

Belongs to the peptidase S1 family. Kallikrein subfamily.

It catalyses the reaction Preferential cleavage of Arg-|-Xaa bonds in small molecule substrates. Highly selective action to release kallidin (lysyl-bradykinin) from kininogen involves hydrolysis of Met-|-Xaa or Leu-|-Xaa.. Its function is as follows. Glandular kallikreins cleave Met-Lys and Arg-Ser bonds in kininogen to release Lys-bradykinin. The polypeptide is Kallikrein-1 (Cavia porcellus (Guinea pig)).